We begin with the raw amino-acid sequence, 459 residues long: Ribulose bisphosphate carboxylase (459 aa).

Residue Asn111 coordinates substrate. Residue Lys166 is the Proton acceptor of the active site. Lys168 lines the substrate pocket. Residues Lys191, Asp193, and Glu194 each coordinate Mg(2+). Lys191 carries the N6-carboxylysine modification. His287 serves as the catalytic Proton acceptor. Residues Arg288, His321, and Ser368 each coordinate substrate.

This sequence belongs to the RuBisCO large chain family. Type II subfamily. The complex is approximately 350 kDa when isolated from either T.denitrificans or R.sphaeroides, suggesting a homohexamer or homooctamer structure. It depends on Mg(2+) as a cofactor.

The enzyme catalyses 2 (2R)-3-phosphoglycerate + 2 H(+) = D-ribulose 1,5-bisphosphate + CO2 + H2O. The catalysed reaction is D-ribulose 1,5-bisphosphate + O2 = 2-phosphoglycolate + (2R)-3-phosphoglycerate + 2 H(+). Its function is as follows. RuBisCO catalyzes two reactions: the carboxylation of D-ribulose 1,5-bisphosphate, the primary event in carbon dioxide fixation, as well as the oxidative fragmentation of the pentose substrate. Both reactions occur simultaneously and in competition at the same active site. This chain is Ribulose bisphosphate carboxylase (cbbM), found in Thiobacillus denitrificans (strain ATCC 25259 / T1).